Reading from the N-terminus, the 174-residue chain is Large ribosomal subunit protein uL10 (174 aa).

This sequence belongs to the universal ribosomal protein uL10 family. As to quaternary structure, part of the ribosomal stalk of the 50S ribosomal subunit. The N-terminus interacts with L11 and the large rRNA to form the base of the stalk. The C-terminus forms an elongated spine to which L12 dimers bind in a sequential fashion forming a multimeric L10(L12)X complex.

In terms of biological role, forms part of the ribosomal stalk, playing a central role in the interaction of the ribosome with GTP-bound translation factors. This chain is Large ribosomal subunit protein uL10, found in Bordetella bronchiseptica (strain ATCC BAA-588 / NCTC 13252 / RB50) (Alcaligenes bronchisepticus).